Reading from the N-terminus, the 387-residue chain is G2/mitotic-specific cyclin-B2 (387 aa).

Belongs to the cyclin family. Cyclin AB subfamily. In terms of assembly, interacts with the CDK1 protein kinase to form a serine/threonine kinase holoenzyme complex also known as maturation promoting factor (MPF). The cyclin subunit imparts substrate specificity to the complex.

In terms of biological role, essential for the control of the cell cycle at the G2/M (mitosis) transition. The chain is G2/mitotic-specific cyclin-B2 (ccnb2) from Oryzias latipes (Japanese rice fish).